The following is a 103-amino-acid chain: UPF0145 protein PERMA_0324 (103 aa).

Belongs to the UPF0145 family.

The chain is UPF0145 protein PERMA_0324 from Persephonella marina (strain DSM 14350 / EX-H1).